Here is a 404-residue protein sequence, read N- to C-terminus: Glucose-1-phosphate adenylyltransferase (404 aa).

Alpha-D-glucose 1-phosphate-binding positions include Tyr99, Gly164, 179–180 (EK), and Ser197.

It belongs to the bacterial/plant glucose-1-phosphate adenylyltransferase family.

The catalysed reaction is alpha-D-glucose 1-phosphate + ATP + H(+) = ADP-alpha-D-glucose + diphosphate. The protein operates within capsule biogenesis; capsule polysaccharide biosynthesis. It functions in the pathway glycan biosynthesis; glycogen biosynthesis. In terms of biological role, involved in the biosynthesis of ADP-glucose, a building block, required in the biosynthesis of maltose-1-phosphate (M1P) and in the elongation reactions to produce linear alpha-1,4-glucans. Catalyzes the reaction between ATP and alpha-D-glucose 1-phosphate (G1P) to produce pyrophosphate and ADP-Glc. The sequence is that of Glucose-1-phosphate adenylyltransferase from Mycobacteroides abscessus (strain ATCC 19977 / DSM 44196 / CCUG 20993 / CIP 104536 / JCM 13569 / NCTC 13031 / TMC 1543 / L948) (Mycobacterium abscessus).